Reading from the N-terminus, the 330-residue chain is Protein FAM170A (330 aa).

Disordered stretches follow at residues Met1 to Thr54, His76 to Leu104, and Val169 to Pro218. Residues Ser174 to Ser185 show a composition bias toward polar residues. The segment covering Gly189–Ser200 has biased composition (basic and acidic residues). A Phosphothreonine modification is found at Thr217. The segment at Phe228 to Arg252 adopts a C2H2-type; degenerate zinc-finger fold. Positions Asn270–Ser330 are disordered. Residues Ser275 to Lys293 are compositionally biased toward acidic residues. Ser315 is modified (phosphoserine).

Belongs to the FAM170 family. In terms of tissue distribution, expressed strongly in testis and brain and weakly in prostate, spleen, pancreas and uterus.

Its subcellular location is the nucleus. Its function is as follows. Acts as a nuclear transcription factor that positively regulates the expression of heat shock genes. Binds to heat shock promoter elements (HSE). The protein is Protein FAM170A (FAM170A) of Homo sapiens (Human).